The sequence spans 376 residues: Succinyl-diaminopimelate desuccinylase (376 aa).

Position 67 (His67) interacts with Zn(2+). Asp69 is an active-site residue. Asp100 serves as a coordination point for Zn(2+). Catalysis depends on Glu134, which acts as the Proton acceptor. The Zn(2+) site is built by Glu135, Glu163, and His349.

It belongs to the peptidase M20A family. DapE subfamily. In terms of assembly, homodimer. Zn(2+) serves as cofactor. It depends on Co(2+) as a cofactor.

The enzyme catalyses N-succinyl-(2S,6S)-2,6-diaminopimelate + H2O = (2S,6S)-2,6-diaminopimelate + succinate. It functions in the pathway amino-acid biosynthesis; L-lysine biosynthesis via DAP pathway; LL-2,6-diaminopimelate from (S)-tetrahydrodipicolinate (succinylase route): step 3/3. Its function is as follows. Catalyzes the hydrolysis of N-succinyl-L,L-diaminopimelic acid (SDAP), forming succinate and LL-2,6-diaminopimelate (DAP), an intermediate involved in the bacterial biosynthesis of lysine and meso-diaminopimelic acid, an essential component of bacterial cell walls. This is Succinyl-diaminopimelate desuccinylase from Actinobacillus succinogenes (strain ATCC 55618 / DSM 22257 / CCUG 43843 / 130Z).